Reading from the N-terminus, the 160-residue chain is FMRFamide-like neuropeptides 13 (160 aa).

The signal sequence occupies residues Met1–Ala17. The propeptide occupies Phe18–Ser43. A phenylalanine amide mark is found at Phe60, Phe73, Phe85, Phe98, Phe110, Phe123, Phe135, Phe146, and Phe157.

This sequence belongs to the FARP (FMRFamide related peptide) family. Expressed in the ASE sensory neurons, the DD motor neurons, the 15, M3 and M5 cholinergic pharyngeal motoneurons, and the ASG, ASK and BAG neurons.

It localises to the secreted. Its function is as follows. Probable FMRFamide-like neuropeptides. Binds to neuronal receptors such as dmsr-1 to promote sleep in response to cellular stress also known as stress-induced sleep (SIS). Plays a role in behaviors associated with SIS, acting in concert with the FMRFamide related peptide, flp-24 and neuropeptide-like protein nlp-8. In terms of biological role, AADGAPLIRF-amide: Inhibits muscle tension in somatic muscle. Acts as a ligand for the npr-22 receptor in vitro. Acts as a ligand for isoform a of the dmsr-1 G-protein coupled receptor in vitro. APEASPFIRF-amide: Inhibits muscle tension in somatic muscle. Potent inhibitor of the activity of the dissected pharyngeal myogenic muscle system. Acts as a ligand for isoform a of the dmsr-1 G-protein coupled receptor in vitro. Functionally, acts as a ligand for the npr-22 receptor in vitro. Acts as a ligand for isoform a of the dmsr-1 G-protein coupled receptor in vitro. Its function is as follows. Acts as a ligand for isoform a of the dmsr-1 G-protein coupled receptor in vitro. This Caenorhabditis elegans protein is FMRFamide-like neuropeptides 13.